The sequence spans 152 residues: Transcriptional repressor NrdR (152 aa).

The segment covering 1–10 (MKCPSCQHNG) has biased composition (polar residues). Positions 1–21 (MKCPSCQHNGSRVLDSRPADE) are disordered. A zinc finger lies at 3 to 34 (CPSCQHNGSRVLDSRPADEGKSIRRRRECEAC). The ATP-cone domain maps to 49-139 (LIVVKKEGVR…VYRQFKDINV (91 aa)).

Belongs to the NrdR family. Requires Zn(2+) as cofactor.

In terms of biological role, negatively regulates transcription of bacterial ribonucleotide reductase nrd genes and operons by binding to NrdR-boxes. This is Transcriptional repressor NrdR from Bacillus velezensis (strain DSM 23117 / BGSC 10A6 / LMG 26770 / FZB42) (Bacillus amyloliquefaciens subsp. plantarum).